Here is a 722-residue protein sequence, read N- to C-terminus: D-(-)-3-hydroxybutyrate oligomer hydrolase (722 aa).

A compositionally biased stretch (polar residues) spans 1–11 (MQQRHLSQSAH). Residues 1–20 (MQQRHLSQSAHSHGHGTRRA) are disordered. The N-terminal stretch at 1–36 (MQQRHLSQSAHSHGHGTRRAHRRNTIAIAVATLAVA) is a signal peptide. Residue Ser-327 is the Charge relay system of the active site. The disordered stretch occupies residues 671–697 (PPSQVVRTTPRGGADTDTVGPRIQPSN).

It belongs to the D-(-)-3-hydroxybutyrate oligomer hydrolase family.

It is found in the secreted. The catalysed reaction is (3R)-hydroxybutanoate dimer + H2O = 2 (R)-3-hydroxybutanoate + H(+). Its pathway is lipid metabolism; butanoate metabolism. Its function is as follows. Participates in the degradation of poly-3-hydroxybutyrate (PHB). It works downstream of poly(3-hydroxybutyrate) depolymerase, hydrolyzing D(-)-3-hydroxybutyrate oligomers of various length (3HB-oligomers) into 3HB-monomers. This is D-(-)-3-hydroxybutyrate oligomer hydrolase from Cupriavidus metallidurans (strain ATCC 43123 / DSM 2839 / NBRC 102507 / CH34) (Ralstonia metallidurans).